The following is a 123-amino-acid chain: Large ribosomal subunit protein bL12 (123 aa).

The interval 98–123 (KEGVSKEEAEEIKSKLEDAGATVELK) is disordered. Over residues 100–115 (GVSKEEAEEIKSKLED) the composition is skewed to basic and acidic residues.

Belongs to the bacterial ribosomal protein bL12 family. In terms of assembly, homodimer. Part of the ribosomal stalk of the 50S ribosomal subunit. Forms a multimeric L10(L12)X complex, where L10 forms an elongated spine to which 2 to 4 L12 dimers bind in a sequential fashion. Binds GTP-bound translation factors.

Functionally, forms part of the ribosomal stalk which helps the ribosome interact with GTP-bound translation factors. Is thus essential for accurate translation. The protein is Large ribosomal subunit protein bL12 of Halothermothrix orenii (strain H 168 / OCM 544 / DSM 9562).